The primary structure comprises 461 residues: GTPase Der (461 aa).

EngA-type G domains follow at residues 2–164 (QKII…EDDV) and 197–368 (IRVG…KNFT). Residues 8–15 (GKPNVGKS), 55–59 (DSGGL), 116–119 (NKID), 203–210 (GRVNVGKS), 250–254 (DTAGI), and 314–317 (NKWD) each bind GTP. The KH-like domain occupies 369–453 (QKIQTSKLNE…PIVLAPKKRG (85 aa)).

It belongs to the TRAFAC class TrmE-Era-EngA-EngB-Septin-like GTPase superfamily. EngA (Der) GTPase family. As to quaternary structure, associates with the 50S ribosomal subunit.

In terms of biological role, GTPase that plays an essential role in the late steps of ribosome biogenesis. The sequence is that of GTPase Der from Campylobacter curvus (strain 525.92).